We begin with the raw amino-acid sequence, 706 residues long: Capsid vertex component 1 (706 aa).

A disordered region spans residues 321 to 347; sequence DSGRFVNSGPQRHLPPQGPRSPASRDC.

This sequence belongs to the herpesviridae CVC1 protein family. In terms of assembly, interacts (via C-terminus) with capsid vertex component 2/CVC2.

The protein resides in the virion. The protein localises to the host nucleus. Functionally, capsid vertex-specific component that plays a role during viral DNA encapsidation, assuring correct genome cleavage and presumably stabilizing capsids that contain full-length viral genomes. The protein is Capsid vertex component 1 of Equus caballus (Horse).